A 334-amino-acid polypeptide reads, in one-letter code: Dual specificity mitogen-activated protein kinase kinase 6 (334 aa).

The segment covering 1–11 has biased composition (basic residues); sequence MSQSKGKKRNP. The disordered stretch occupies residues 1–34; that stretch reads MSQSKGKKRNPGLKIPKEAFEQPQTSSTPPRDLD. The d domain stretch occupies residues 4-19; that stretch reads SKGKKRNPGLKIPKEA. The Protein kinase domain occupies 53-314; it reads LEPIVELGRG…YPELMQHPFF (262 aa). ATP is bound by residues 59-67 and Lys-82; that span reads LGRGAYGVV. Catalysis depends on Asp-179, which acts as the Proton acceptor. Residue Ser-207 is modified to Phosphoserine; by MAPK3. At Thr-211 the chain carries Phosphothreonine; by MAPK3. Residues 311 to 334 form a DVD domain region; that stretch reads HPFFTVHESKAADVASFVKLILGD.

The protein belongs to the protein kinase superfamily. STE Ser/Thr protein kinase family. MAP kinase kinase subfamily. As to quaternary structure, dimer. Interacts (via its D domain) with its substrates MAPK11, MAPK12, MAPK13 and MAPK14. Interacts (via its DVD domain) with MAP3Ks activators like MAP3K5/ASK1, MAP3K1/MEKK1, MAP3K2/MEKK2, MAP3K3/MEKK3, MAP3K4/MEKK4, MAP3K7/TAK1, MAP3K11/MLK3 and MAP3K17/TAOK2. Interacts with DCTN1. Interacts with EIF2AK2/PKR. In terms of processing, weakly autophosphorylated. Phosphorylated at Ser-207 and Thr-211 by the majority of M3Ks, such as MAP3K5/ASK1, MAP3K1/MEKK1, MAP3K2/MEKK2, MAP3K3/MEKK3, MAP3K4/MEKK4, MAP3K7/TAK1, MAP3K11/MLK3 and MAP3K17/TAOK2. Post-translationally, in response to genotoxic stress, MAP3K-phosphorylated MAP2K6 is ubiquitinated and degraded by the SCF(FBXO31) complex.

It localises to the nucleus. The protein resides in the cytoplasm. The protein localises to the cytoskeleton. It catalyses the reaction L-seryl-[protein] + ATP = O-phospho-L-seryl-[protein] + ADP + H(+). It carries out the reaction L-threonyl-[protein] + ATP = O-phospho-L-threonyl-[protein] + ADP + H(+). The catalysed reaction is L-tyrosyl-[protein] + ATP = O-phospho-L-tyrosyl-[protein] + ADP + H(+). Its activity is regulated as follows. Activated by dual phosphorylation on Ser-207 and Thr-211 in response to a variety of cellular stresses, including UV radiation, osmotic shock, hypoxia, inflammatory cytokines, interferon gamma (IFNG), and less often by growth factors. MAP2K6/MKK6 is activated by the majority of M3Ks, such as MAP3K5/ASK1, MAP3K1/MEKK1, MAP3K2/MEKK2, MAP3K3/MEKK3, MAP3K4/MEKK4, MAP3K7/TAK1, MAP3K11/MLK3 and MAP3K17/TAOK2. Its function is as follows. Dual specificity protein kinase which acts as an essential component of the MAP kinase signal transduction pathway. With MAP3K3/MKK3, catalyzes the concomitant phosphorylation of a threonine and a tyrosine residue in the MAP kinases p38 MAPK11, MAPK12, MAPK13 and MAPK14 and plays an important role in the regulation of cellular responses to cytokines and all kinds of stresses. Especially, MAP2K3/MKK3 and MAP2K6/MKK6 are both essential for the activation of MAPK11 and MAPK13 induced by environmental stress, whereas MAP2K6/MKK6 is the major MAPK11 activator in response to TNF. MAP2K6/MKK6 also phosphorylates and activates PAK6. The p38 MAP kinase signal transduction pathway leads to direct activation of transcription factors. Nuclear targets of p38 MAP kinase include the transcription factors ATF2 and ELK1. Within the p38 MAPK signal transduction pathway, MAP3K6/MKK6 mediates phosphorylation of STAT4 through MAPK14 activation, and is therefore required for STAT4 activation and STAT4-regulated gene expression in response to IL-12 stimulation. The pathway is also crucial for IL-6-induced SOCS3 expression and down-regulation of IL-6-mediated gene induction; and for IFNG-dependent gene transcription. Has a role in osteoclast differentiation through NF-kappa-B transactivation by TNFSF11, and in endochondral ossification and since SOX9 is another likely downstream target of the p38 MAPK pathway. MAP2K6/MKK6 mediates apoptotic cell death in thymocytes. Acts also as a regulator for melanocytes dendricity, through the modulation of Rho family GTPases. This is Dual specificity mitogen-activated protein kinase kinase 6 (Map2k6) from Mus musculus (Mouse).